Reading from the N-terminus, the 1162-residue chain is Paired amphipathic helix protein Sin3-like 5 (1162 aa).

The segment at 1 to 37 (MKRVREEVYVEPQMRGPTVSSRGETNGRPSTISGGGT) is disordered. Residues 18-30 (TVSSRGETNGRPS) show a composition bias toward polar residues. PAH domains lie at 28–109 (RPST…LPKG) and 123–193 (KPVD…LPDF). Disordered regions lie at residues 702-727 (RVSD…ESCE), 743-779 (QKLP…DDDN), 803-830 (GGQV…SNEG), and 1121-1143 (KKAT…ELSR). Residue Ser-817 is modified to Phosphoserine. Positions 1123-1139 (ATLNPTGPENVKTSDSS) are enriched in polar residues.

It is found in the nucleus. In terms of biological role, acts as a transcriptional repressor. Plays roles in regulating gene expression and genome stability. The polypeptide is Paired amphipathic helix protein Sin3-like 5 (SNL5) (Arabidopsis thaliana (Mouse-ear cress)).